Here is a 404-residue protein sequence, read N- to C-terminus: Multidrug resistance protein MdtG (404 aa).

11 consecutive transmembrane segments (helical) span residues Leu19–Val39, Leu56–Ala76, Leu90–Ile110, Ala113–Val133, Thr144–Ala164, Pro171–Ile191, Leu222–Leu242, Ile254–Pro274, Ile288–Thr308, Phe317–Asn337, and Ala376–Leu396.

It belongs to the major facilitator superfamily. DHA1 family. MdtG (TC 2.A.1.2.20) subfamily.

It localises to the cell inner membrane. The chain is Multidrug resistance protein MdtG from Salmonella schwarzengrund (strain CVM19633).